The following is a 485-amino-acid chain: Glutamyl-tRNA(Gln) amidotransferase subunit A (485 aa).

Active-site charge relay system residues include lysine 79 and serine 154. Serine 178 functions as the Acyl-ester intermediate in the catalytic mechanism.

This sequence belongs to the amidase family. GatA subfamily. Heterotrimer of A, B and C subunits.

The enzyme catalyses L-glutamyl-tRNA(Gln) + L-glutamine + ATP + H2O = L-glutaminyl-tRNA(Gln) + L-glutamate + ADP + phosphate + H(+). In terms of biological role, allows the formation of correctly charged Gln-tRNA(Gln) through the transamidation of misacylated Glu-tRNA(Gln) in organisms which lack glutaminyl-tRNA synthetase. The reaction takes place in the presence of glutamine and ATP through an activated gamma-phospho-Glu-tRNA(Gln). The chain is Glutamyl-tRNA(Gln) amidotransferase subunit A from Staphylococcus aureus (strain MW2).